Here is a 546-residue protein sequence, read N- to C-terminus: (-)-5-epieremophilene synthase STPS1 (546 aa).

Residues D299, D303, D442, T446, and E450 each contribute to the Mg(2+) site. The short motif at 299 to 303 (DDTYD) is the DDXXD motif element.

The protein belongs to the terpene synthase family. Tpsa subfamily. Monomer. It depends on Mg(2+) as a cofactor. In terms of tissue distribution, highly expressed in leaves and at lower levels in flowers.

The enzyme catalyses (2E,6E)-farnesyl diphosphate = (-)-5-epi-eremophilene + diphosphate. The protein operates within secondary metabolite biosynthesis; terpenoid biosynthesis. In terms of biological role, sesquiterpene synthase that catalyzes the conversion of farnesyl diphosphate to (-)-5-epi-eremophilene. The protein is (-)-5-epieremophilene synthase STPS1 of Salvia miltiorrhiza (Chinese sage).